The sequence spans 451 residues: 3-carboxy-cis,cis-muconate cycloisomerase (451 aa).

The protein belongs to the class-II fumarase/aspartase family.

The enzyme catalyses 2-(carboxymethyl)-5-oxo-2,5-dihydro-2-furoate = 3-carboxy-cis,cis-muconate + H(+). Its function is as follows. Catalyzes an anti cycloisomerization. In Bradyrhizobium diazoefficiens (strain JCM 10833 / BCRC 13528 / IAM 13628 / NBRC 14792 / USDA 110), this protein is 3-carboxy-cis,cis-muconate cycloisomerase (pcaB).